A 396-amino-acid polypeptide reads, in one-letter code: Elongation factor Tu 1 (396 aa).

The 197-residue stretch at 10–206 (KPHCNIGTIG…TVDDYIPQPD (197 aa)) folds into the tr-type G domain. The segment at 19-26 (GHVDHGKT) is G1. Residue 19 to 26 (GHVDHGKT) participates in GTP binding. Thr26 contacts Mg(2+). Positions 60–64 (GITIN) are G2. Residues 81–84 (DCPG) are G3. GTP-binding positions include 81-85 (DCPGH) and 136-139 (NKVD). The segment at 136 to 139 (NKVD) is G4. The tract at residues 174–176 (SAK) is G5.

This sequence belongs to the TRAFAC class translation factor GTPase superfamily. Classic translation factor GTPase family. EF-Tu/EF-1A subfamily. In terms of assembly, monomer.

Its subcellular location is the cytoplasm. The catalysed reaction is GTP + H2O = GDP + phosphate + H(+). GTP hydrolase that promotes the GTP-dependent binding of aminoacyl-tRNA to the A-site of ribosomes during protein biosynthesis. The chain is Elongation factor Tu 1 from Caulobacter sp. (strain K31).